The chain runs to 805 residues: RFX-like transcription factor daf-19 (805 aa).

The segment covering 1–14 (MTNEEPVPSTSSVL) has biased composition (polar residues). Residues 1 to 113 (MTNEEPVPST…TPRKKMEPED (113 aa)) form a disordered region. Residues 19 to 92 (KNVKIETPSR…DSKSLSKETH (74 aa)) are compositionally biased toward basic and acidic residues. A compositionally biased stretch (polar residues) spans 93–104 (NTISTRSSSSGT). Positions 260–334 (TVNWLFENYE…YHYYGIRLKD (75 aa)) form a DNA-binding region, RFX-type winged-helix.

It belongs to the RFX family. As to expression, ciliated sensory neurons. In terms of tissue distribution, expressed in the male tail HOB and RnB neurons but not in male-specific CEM head neurons or other ciliated neurons.

It localises to the nucleus. Its function is as follows. Probable transcription factor. May regulate some genes of ciliated sensory neurons. May activate the expression of the shared components of sensory cilia, but not the cell-type-specific expression. Together with transcription factor atf-7, involved in regulation of the serotonergic response of ADF neurons to pathogenic food. In terms of biological role, involved in male mating behavior; may play a role in functional specialization of PKD ciliated sensory neurons. This Caenorhabditis elegans protein is RFX-like transcription factor daf-19.